We begin with the raw amino-acid sequence, 44 residues long: Putative protein PsbN (44 aa).

A helical transmembrane segment spans residues Ile-3–Ser-23.

It belongs to the PsbN family.

The protein localises to the plastid. It is found in the chloroplast thylakoid membrane. Functionally, may play a role in photosystem I and II biogenesis. The protein is Putative protein PsbN of Euglena gracilis.